The sequence spans 57 residues: DNA gyrase inhibitor YacG (57 aa).

Positions 10, 13, 25, and 29 each coordinate Zn(2+).

It belongs to the DNA gyrase inhibitor YacG family. Interacts with GyrB. Requires Zn(2+) as cofactor.

Its function is as follows. Inhibits all the catalytic activities of DNA gyrase by preventing its interaction with DNA. Acts by binding directly to the C-terminal domain of GyrB, which probably disrupts DNA binding by the gyrase. The chain is DNA gyrase inhibitor YacG from Brucella abortus (strain 2308).